The following is a 121-amino-acid chain: Large ribosomal subunit protein uL22 (121 aa).

This sequence belongs to the universal ribosomal protein uL22 family. In terms of assembly, part of the 50S ribosomal subunit.

Functionally, this protein binds specifically to 23S rRNA; its binding is stimulated by other ribosomal proteins, e.g. L4, L17, and L20. It is important during the early stages of 50S assembly. It makes multiple contacts with different domains of the 23S rRNA in the assembled 50S subunit and ribosome. The globular domain of the protein is located near the polypeptide exit tunnel on the outside of the subunit, while an extended beta-hairpin is found that lines the wall of the exit tunnel in the center of the 70S ribosome. The chain is Large ribosomal subunit protein uL22 from Hydrogenobaculum sp. (strain Y04AAS1).